The primary structure comprises 552 residues: Arginine--tRNA ligase (552 aa).

A 'HIGH' region motif is present at residues 130–140; sequence ANPTGPLSIGH.

Belongs to the class-I aminoacyl-tRNA synthetase family. As to quaternary structure, monomer.

The protein localises to the cytoplasm. The enzyme catalyses tRNA(Arg) + L-arginine + ATP = L-arginyl-tRNA(Arg) + AMP + diphosphate. This Desulfotalea psychrophila (strain LSv54 / DSM 12343) protein is Arginine--tRNA ligase.